Here is a 929-residue protein sequence, read N- to C-terminus: Protocadherin gamma-B3 (929 aa).

Residues 1–30 (MGNSSGWRGPAGQRRMLFLFLLSLLDQALS) form the signal peptide. 6 consecutive Cadherin domains span residues 31–133 (EPIR…PPTF), 134–242 (SQNI…PPVF), 243–347 (TQDM…APEI), 348–452 (TLAS…VPVF), 453–562 (HQAS…APLV), and 570–675 (EGSA…QPDL). Topologically, residues 31-691 (EPIRYAIPEE…SDPQAELQFH (661 aa)) are extracellular. N-linked (GlcNAc...) asparagine glycosylation occurs at Asn-136. Asn-419 and Asn-545 each carry an N-linked (GlcNAc...) asparagine glycan. A helical transmembrane segment spans residues 692–712 (LVVALALISVLFLLAVILAIS). The Cytoplasmic segment spans residues 713–929 (LRLRCSSRPA…KKKSGKKEKK (217 aa)). Disordered regions lie at residues 791–838 (NDNP…WPNN) and 899–929 (ATLT…KEKK). Positions 919–929 (NKKKSGKKEKK) are enriched in basic residues.

It localises to the cell membrane. Its function is as follows. Potential calcium-dependent cell-adhesion protein. May be involved in the establishment and maintenance of specific neuronal connections in the brain. The sequence is that of Protocadherin gamma-B3 (PCDHGB3) from Homo sapiens (Human).